The sequence spans 326 residues: Macrosialin (326 aa).

Residues 1–20 (MRLPVCLILLGPLIAQGTEE) form the signal peptide. The mucin-like stretch occupies residues 21–109 (DCPHKKAVTL…ATSPRSSTVG (89 aa)). Topologically, residues 21–291 (DCPHKKAVTL…PCFSCNRDQS (271 aa)) are extracellular. Low complexity predominate over residues 38-58 (PTATESTASPTTSHRPTTTSH). The segment at 38–129 (PTATESTASP…SPRSKGALGN (92 aa)) is disordered. Tandem repeats lie at residues 44–49 (TASPTT), 50–64 (SHRPTTTSHGNVTVH), 65–72 (TSSGPTTV), and 73–88 (THNPATTTSHGNATIS). Residues 59–69 (GNVTVHTSSGP) show a composition bias toward polar residues. Residue Asn-60 is glycosylated (N-linked (GlcNAc...) asparagine). Positions 70-80 (TTVTHNPATTT) are enriched in low complexity. Positions 81 to 108 (SHGNATISHATVSPTTNGTATSPRSSTV) are enriched in polar residues. N-linked (GlcNAc...) asparagine glycans are attached at residues Asn-84 and Asn-97. A compositionally biased stretch (pro residues) spans 111-120 (HPGPPPPSPS). Asn-129, Asn-134, Asn-169, Asn-218, Asn-233, and Asn-251 each carry an N-linked (GlcNAc...) asparagine glycan. Residues Cys-139 and Cys-177 are joined by a disulfide bond. A disulfide bridge links Cys-249 with Cys-286. Residues 292–316 (LLLPLIIGLVLLGLLTLVLIAFCIT) form a helical membrane-spanning segment. Residues 317-326 (RRRQSTYQPL) are Cytoplasmic-facing.

The protein belongs to the LAMP family. In terms of processing, N- and O-glycosylated. As to expression, expressed in tissue macrophages and to a lesser extent in dendritic cells.

It localises to the endosome membrane. It is found in the lysosome membrane. The protein localises to the cell membrane. Functionally, could play a role in phagocytic activities of tissue macrophages, both in intracellular lysosomal metabolism and extracellular cell-cell and cell-pathogen interactions. Binds to tissue- and organ-specific lectins or selectins, allowing homing of macrophage subsets to particular sites. Rapid recirculation of CD68 from endosomes and lysosomes to the plasma membrane may allow macrophages to crawl over selectin-bearing substrates or other cells. The sequence is that of Macrosialin (Cd68) from Mus musculus (Mouse).